The sequence spans 77 residues: Small ribosomal subunit protein bS20 (77 aa).

This sequence belongs to the bacterial ribosomal protein bS20 family.

Its function is as follows. Binds directly to 16S ribosomal RNA. This Lactococcus lactis subsp. lactis (strain IL1403) (Streptococcus lactis) protein is Small ribosomal subunit protein bS20.